Consider the following 867-residue polypeptide: KH domain-containing protein akap-1 (867 aa).

Residues 108–128 traverse the membrane as a helical segment; it reads HALLIALGGFSIAALFVWYIN. 2 disordered regions span residues 145-458 and 481-523; these read SNGL…QKRV and HENA…GLTT. The span at 152–162 shows a compositional bias: polar residues; the sequence is ATASDVQTENG. Basic and acidic residues-rich tracts occupy residues 186–211, 218–239, 247–275, and 298–307; these read QQKD…DKKQ, TEKK…DHVA, SEHK…EIEV, and QFVKKEEPKL. Residues 336–345 are compositionally biased toward polar residues; that stretch reads TKMNDATSPL. Residues 363 to 383 show a composition bias toward basic and acidic residues; the sequence is EMEKSFNEEEFRLNESSDIDR. The segment covering 397-408 has biased composition (basic residues); it reads NKNRSSQKRKGG. Composition is skewed to basic and acidic residues over residues 441–458 and 481–490; these read LTKE…QKRV and HENASYEKSD. Positions 494–507 are enriched in polar residues; that stretch reads LDSQNSEASSQDSG. The KH domain maps to 528–595; it reads LPMYEFEIPN…DEINHCLQML (68 aa). The region spanning 689–747 is the Tudor domain; that stretch reads PCQNGLLCAAPVGNAWFRAVTVQYFDETDEVFVKFVDYGGYSKMARQDLRQIRTDLMSL.

Its subcellular location is the membrane. The chain is KH domain-containing protein akap-1 from Caenorhabditis elegans.